The sequence spans 201 residues: Peptidyl-tRNA hydrolase (201 aa).

Position 14 (Y14) interacts with tRNA. H19 (proton acceptor) is an active-site residue. Residues Y64, N66, and N112 each contribute to the tRNA site.

Belongs to the PTH family. In terms of assembly, monomer.

Its subcellular location is the cytoplasm. It catalyses the reaction an N-acyl-L-alpha-aminoacyl-tRNA + H2O = an N-acyl-L-amino acid + a tRNA + H(+). Functionally, hydrolyzes ribosome-free peptidyl-tRNAs (with 1 or more amino acids incorporated), which drop off the ribosome during protein synthesis, or as a result of ribosome stalling. Its function is as follows. Catalyzes the release of premature peptidyl moieties from peptidyl-tRNA molecules trapped in stalled 50S ribosomal subunits, and thus maintains levels of free tRNAs and 50S ribosomes. In Bradyrhizobium sp. (strain ORS 278), this protein is Peptidyl-tRNA hydrolase.